Here is a 198-residue protein sequence, read N- to C-terminus: Carnitine operon protein CaiE (198 aa).

A disordered region spans residues 174–198; sequence KPLTQAEENRPRLKGTTDVKPKSAQ. Over residues 180-198 the composition is skewed to basic and acidic residues; sequence EENRPRLKGTTDVKPKSAQ.

The protein belongs to the transferase hexapeptide repeat family.

The protein operates within amine and polyamine metabolism; carnitine metabolism. Overproduction of CaiE stimulates the activity of CaiB and CaiD. The sequence is that of Carnitine operon protein CaiE from Salmonella typhimurium (strain LT2 / SGSC1412 / ATCC 700720).